A 512-amino-acid polypeptide reads, in one-letter code: 2-isopropylmalate synthase (512 aa).

The 263-residue stretch at 4 to 266 folds into the Pyruvate carboxyltransferase domain; that stretch reads IEIFDTTLRD…TTKLNLKEIA (263 aa). Asp13, His201, His203, and Asn237 together coordinate Mn(2+). Positions 390–512 are regulatory domain; sequence QLESVQLAYG…GEPTPVSATI (123 aa).

This sequence belongs to the alpha-IPM synthase/homocitrate synthase family. LeuA type 1 subfamily. As to quaternary structure, homodimer. Mn(2+) serves as cofactor.

The protein resides in the cytoplasm. It carries out the reaction 3-methyl-2-oxobutanoate + acetyl-CoA + H2O = (2S)-2-isopropylmalate + CoA + H(+). It participates in amino-acid biosynthesis; L-leucine biosynthesis; L-leucine from 3-methyl-2-oxobutanoate: step 1/4. Its function is as follows. Catalyzes the condensation of the acetyl group of acetyl-CoA with 3-methyl-2-oxobutanoate (2-ketoisovalerate) to form 3-carboxy-3-hydroxy-4-methylpentanoate (2-isopropylmalate). The chain is 2-isopropylmalate synthase from Brevibacillus brevis (strain 47 / JCM 6285 / NBRC 100599).